The chain runs to 333 residues: Adenosine deaminase (333 aa).

Zn(2+) is bound by residues His12 and His14. His14, Asp16, and Gly170 together coordinate substrate. Residue His197 participates in Zn(2+) binding. Residue Glu200 is the Proton donor of the active site. Asp278 contributes to the Zn(2+) binding site. Asp279 contributes to the substrate binding site.

Belongs to the metallo-dependent hydrolases superfamily. Adenosine and AMP deaminases family. Adenosine deaminase subfamily. Zn(2+) is required as a cofactor.

The enzyme catalyses adenosine + H2O + H(+) = inosine + NH4(+). It catalyses the reaction 2'-deoxyadenosine + H2O + H(+) = 2'-deoxyinosine + NH4(+). In terms of biological role, catalyzes the hydrolytic deamination of adenosine and 2-deoxyadenosine. The polypeptide is Adenosine deaminase (Klebsiella pneumoniae (strain 342)).